The primary structure comprises 594 residues: Sodium-dependent glucose transporter 1 (594 aa).

11 consecutive transmembrane segments (helical) span residues 77 to 97, 115 to 137, 144 to 161, 166 to 186, 205 to 225, 269 to 289, 311 to 331, 349 to 371, 393 to 413, 439 to 459, and 467 to 487; these read WLVS…ISVL, LSYI…GILF, LLLG…SGTP, AWVL…LDTG, ALHF…KLLF, IVIG…YFCI, TLII…VAYG, AAGL…IFFA, LLCL…LYGI, IFVV…GFLL, and LLMY…PVLY.

It belongs to the major facilitator superfamily.

Its subcellular location is the apical cell membrane. May function as a sodium-dependent glucose transporter. Potential channels for urea in the inner medulla of kidney. This chain is Sodium-dependent glucose transporter 1 (mfsd4b), found in Danio rerio (Zebrafish).